Reading from the N-terminus, the 824-residue chain is RelA-associated inhibitor (824 aa).

An N-acetylmethionine modification is found at methionine 1. Disordered stretches follow at residues 48 to 87 (SLWS…SPQK) and 99 to 271 (RSES…YERL). 7 positions are modified to phosphoserine: serine 84, serine 100, serine 102, serine 110, serine 113, serine 119, and serine 120. Residue threonine 123 is modified to Phosphothreonine. Position 134 is a phosphoserine (serine 134). An omega-N-methylarginine mark is found at arginine 137, arginine 142, arginine 144, arginine 160, arginine 167, and arginine 180. Phosphoserine occurs at positions 183, 187, and 203. Arginine 205 bears the Omega-N-methylarginine mark. Residue threonine 275 is modified to Phosphothreonine. Serine 279 is subject to Phosphoserine. 2 disordered regions span residues 291–370 (SLDG…RPIP) and 388–501 (RAVL…QTVP). Threonine 307 is subject to Phosphothreonine. 3 positions are modified to phosphoserine: serine 315, serine 331, and serine 338. At threonine 340 the chain carries Phosphothreonine. Positions 359–370 (QPRSTPRQRPIP) are enriched in low complexity. Positions 400–424 (APPPKLPPQPPPQPQMQPQPQPQPQ) are enriched in pro residues. Over residues 425-440 (MQPQSQAQPQTPAPQQ) the composition is skewed to low complexity. Residues serine 522, serine 563, and serine 593 each carry the phosphoserine modification. A disordered region spans residues 547 to 614 (FHRHGGPGPG…SVLRKVGSPR (68 aa)). The span at 575–597 (PPAPAPPAPIPPPAPPQSSPPEQ) shows a compositional bias: pro residues. ANK repeat units lie at residues 655 to 684 (EGIT…NVNS) and 688 to 717 (HGWT…AIFA). Residues 754–816 (MHNGVVYALW…PRNYFGLFPR (63 aa)) enclose the SH3 domain.

This sequence belongs to the iASPP family. As to quaternary structure, interacts with TP63 and TP73. Interacts with RELA NF-kappa-B subunit and with SP1 via its C-terminal part. Interacts (via SH3 domain and ANK repeats) with p53/TP53; the interaction inhibits pro-apoptotic activity of p53/TP53. In terms of tissue distribution, most abundant in skin with high levels also found in heart, testis and stomach. In 15.5 dpc embryonic heart, expressed at higher levels in atria than ventricles.

The protein localises to the cytoplasm. It localises to the nucleus. In terms of biological role, regulator that plays a central role in regulation of apoptosis and transcription via its interaction with NF-kappa-B and p53/TP53 proteins. Inhibits p53/TP53 function, possibly by preventing the association between p53/TP53 and ASPP1 or ASPP2, and therefore suppressing the subsequent activation of apoptosis. Is involved in NF-kappa-B dependent negative regulation of inflammatory response. In Mus musculus (Mouse), this protein is RelA-associated inhibitor.